The chain runs to 525 residues: Protein translocase subunit SecD (525 aa).

6 consecutive transmembrane segments (helical) span residues 9–29 (LYLV…SLLG), 368–388 (VLIG…GFGM), 392–412 (LAVV…QATL), 415–435 (PGIA…VLIF), 460–480 (FSTI…LYQF), and 487–507 (GFAV…IFVT).

It belongs to the SecD/SecF family. SecD subfamily. As to quaternary structure, forms a complex with SecF. Part of the essential Sec protein translocation apparatus which comprises SecA, SecYEG and auxiliary proteins SecDF-YajC and YidC.

Its subcellular location is the cell inner membrane. Part of the Sec protein translocase complex. Interacts with the SecYEG preprotein conducting channel. SecDF uses the proton motive force (PMF) to complete protein translocation after the ATP-dependent function of SecA. The polypeptide is Protein translocase subunit SecD (Magnetococcus marinus (strain ATCC BAA-1437 / JCM 17883 / MC-1)).